Consider the following 346-residue polypeptide: UDP-3-O-acylglucosamine N-acyltransferase (346 aa).

Catalysis depends on histidine 253, which acts as the Proton acceptor.

It belongs to the transferase hexapeptide repeat family. LpxD subfamily. As to quaternary structure, homotrimer.

The catalysed reaction is a UDP-3-O-[(3R)-3-hydroxyacyl]-alpha-D-glucosamine + a (3R)-hydroxyacyl-[ACP] = a UDP-2-N,3-O-bis[(3R)-3-hydroxyacyl]-alpha-D-glucosamine + holo-[ACP] + H(+). Its pathway is bacterial outer membrane biogenesis; LPS lipid A biosynthesis. Its function is as follows. Catalyzes the N-acylation of UDP-3-O-acylglucosamine using 3-hydroxyacyl-ACP as the acyl donor. Is involved in the biosynthesis of lipid A, a phosphorylated glycolipid that anchors the lipopolysaccharide to the outer membrane of the cell. In Rickettsia felis (strain ATCC VR-1525 / URRWXCal2) (Rickettsia azadi), this protein is UDP-3-O-acylglucosamine N-acyltransferase.